Here is a 249-residue protein sequence, read N- to C-terminus: DnaJ homolog subfamily C member 5 homolog (249 aa).

Serine 12 carries the phosphoserine modification. Threonine 13 is modified (phosphothreonine). 2 positions are modified to phosphoserine: serine 14 and serine 17. The 70-residue stretch at 15-84 (GDSLYEILGL…RNIYDNYGSL (70 aa)) folds into the J domain. Phosphotyrosine is present on tyrosine 19. Over residues 146–162 (HDQYSHLNRPDGNREGN) the composition is skewed to basic and acidic residues. Disordered stretches follow at residues 146–177 (HDQY…LEDV) and 218–249 (PFTG…NQKY). Polar residues predominate over residues 227–241 (NENTSLNTTEQTTYT).

Fatty acylated. Heavily palmitoylated in the cysteine string motif. Expressed in wide range of synaptic terminals: embryonic nervous system, larval neuromuscular junctions, adult visual system (neuropil of optic ganglia and terminal of R1-8 photoreceptors) and thoracic neuromuscular junctions. Also expressed in non-neuronal cells: follicle cells, spermatheca, testis and ejaculatory bulb. Low level of expression is found in many neuronal and non-neuronal tissues.

Its subcellular location is the membrane. Functionally, may have an important role in presynaptic function. In Drosophila melanogaster (Fruit fly), this protein is DnaJ homolog subfamily C member 5 homolog.